Here is a 383-residue protein sequence, read N- to C-terminus: Acetylornithine deacetylase (383 aa).

His-80 is a binding site for Zn(2+). Asp-82 is a catalytic residue. Asp-112 serves as a coordination point for Zn(2+). Glu-144 is an active-site residue. Zn(2+) contacts are provided by Glu-145, Glu-169, and His-355.

It belongs to the peptidase M20A family. ArgE subfamily. As to quaternary structure, homodimer. Zn(2+) is required as a cofactor. It depends on Co(2+) as a cofactor. The cofactor is glutathione.

The protein resides in the cytoplasm. The enzyme catalyses N(2)-acetyl-L-ornithine + H2O = L-ornithine + acetate. It participates in amino-acid biosynthesis; L-arginine biosynthesis; L-ornithine from N(2)-acetyl-L-ornithine (linear): step 1/1. Its function is as follows. Catalyzes the hydrolysis of the amide bond of N(2)-acetylated L-amino acids. Cleaves the acetyl group from N-acetyl-L-ornithine to form L-ornithine, an intermediate in L-arginine biosynthesis pathway, and a branchpoint in the synthesis of polyamines. This Klebsiella pneumoniae (strain 342) protein is Acetylornithine deacetylase.